The following is a 165-amino-acid chain: Large ribosomal subunit protein uL10 (165 aa).

Belongs to the universal ribosomal protein uL10 family. Part of the ribosomal stalk of the 50S ribosomal subunit. The N-terminus interacts with L11 and the large rRNA to form the base of the stalk. The C-terminus forms an elongated spine to which L12 dimers bind in a sequential fashion forming a multimeric L10(L12)X complex.

Functionally, forms part of the ribosomal stalk, playing a central role in the interaction of the ribosome with GTP-bound translation factors. The polypeptide is Large ribosomal subunit protein uL10 (Sodalis glossinidius (strain morsitans)).